The sequence spans 376 residues: Glucose-1-phosphate adenylyltransferase (376 aa).

Residues tyrosine 101, glycine 166, 181 to 182 (EK), and serine 192 each bind alpha-D-glucose 1-phosphate.

Belongs to the bacterial/plant glucose-1-phosphate adenylyltransferase family. In terms of assembly, homotetramer.

The catalysed reaction is alpha-D-glucose 1-phosphate + ATP + H(+) = ADP-alpha-D-glucose + diphosphate. It functions in the pathway glycan biosynthesis; glycogen biosynthesis. In terms of biological role, involved in the biosynthesis of ADP-glucose, a building block required for the elongation reactions to produce glycogen. Catalyzes the reaction between ATP and alpha-D-glucose 1-phosphate (G1P) to produce pyrophosphate and ADP-Glc. The polypeptide is Glucose-1-phosphate adenylyltransferase (Bacillus cereus (strain Q1)).